Consider the following 356-residue polypeptide: Histidinol-phosphate aminotransferase (356 aa).

K208 is modified (N6-(pyridoxal phosphate)lysine).

It belongs to the class-II pyridoxal-phosphate-dependent aminotransferase family. Histidinol-phosphate aminotransferase subfamily. As to quaternary structure, homodimer. Requires pyridoxal 5'-phosphate as cofactor.

It catalyses the reaction L-histidinol phosphate + 2-oxoglutarate = 3-(imidazol-4-yl)-2-oxopropyl phosphate + L-glutamate. Its pathway is amino-acid biosynthesis; L-histidine biosynthesis; L-histidine from 5-phospho-alpha-D-ribose 1-diphosphate: step 7/9. The protein is Histidinol-phosphate aminotransferase of Lactococcus lactis subsp. cremoris (strain SK11).